Reading from the N-terminus, the 123-residue chain is Small ribosomal subunit protein bS16 (123 aa).

The disordered stretch occupies residues alanine 79 to glutamate 123.

This sequence belongs to the bacterial ribosomal protein bS16 family.

The chain is Small ribosomal subunit protein bS16 from Brucella melitensis biotype 2 (strain ATCC 23457).